Here is a 384-residue protein sequence, read N- to C-terminus: Deoxyguanosinetriphosphate triphosphohydrolase-like protein (384 aa).

The segment at 12 to 39 (ELASYASDPSKTRGRRHSEPPPENRTEF) is disordered. Positions 28-39 (HSEPPPENRTEF) are enriched in basic and acidic residues. The HD domain occupies 73–208 (RLTHSLEVAQ…ANLADEVAYN (136 aa)).

It belongs to the dGTPase family. Type 2 subfamily.

This chain is Deoxyguanosinetriphosphate triphosphohydrolase-like protein, found in Bordetella parapertussis (strain 12822 / ATCC BAA-587 / NCTC 13253).